The sequence spans 449 residues: Glucose-6-phosphate isomerase (449 aa).

The active-site Proton donor is E291. Catalysis depends on residues H312 and K426.

The protein belongs to the GPI family.

Its subcellular location is the cytoplasm. The catalysed reaction is alpha-D-glucose 6-phosphate = beta-D-fructose 6-phosphate. It functions in the pathway carbohydrate biosynthesis; gluconeogenesis. Its pathway is carbohydrate degradation; glycolysis; D-glyceraldehyde 3-phosphate and glycerone phosphate from D-glucose: step 2/4. Functionally, catalyzes the reversible isomerization of glucose-6-phosphate to fructose-6-phosphate. In Streptococcus pyogenes serotype M12 (strain MGAS2096), this protein is Glucose-6-phosphate isomerase.